Reading from the N-terminus, the 113-residue chain is Protein crumbs homolog 3 (113 aa).

The first 24 residues, 1 to 24 (MATPGLGVLLAFGLPMLPSGWSLT), serve as a signal peptide directing secretion. A disordered region spans residues 23–44 (LTAPDPFTNSTTQPPGDESNGG). Residues 25 to 49 (APDPFTNSTTQPPGDESNGGLSSGA) lie on the Extracellular side of the membrane. The N-linked (GlcNAc...) asparagine glycan is linked to N31. The helical transmembrane segment at 50-70 (IVAITVVFSILGVLLIAVGLF) threads the bilayer. Residues 71 to 113 (LLMRKLREKRQTEGTYRPSSEEQVGARAPPPPNLKLPPEERLI) lie on the Cytoplasmic side of the membrane. The interaction with EPB41L5 stretch occupies residues 77 to 113 (REKRQTEGTYRPSSEEQVGARAPPPPNLKLPPEERLI). The segment at 80–113 (RQTEGTYRPSSEEQVGARAPPPPNLKLPPEERLI) is disordered. Residues 83-92 (EGTYRPSSEE) are compositionally biased toward polar residues. A PDZ-binding motif is present at residues 110–113 (ERLI).

In terms of assembly, component of a complex composed of CRB3, PALS1 and PATJ. Interacts (via C-terminus) with PALS1 (via PDZ domain). Interacts with PARD6A. Interacts (via intracellular domain) with EPB41L5. Interacts with WDR83. In terms of tissue distribution, expressed in the apical renal tubules (at protein level). Expressed in the retinal pigment epithelium.

Its subcellular location is the apical cell membrane. It is found in the cell junction. The protein resides in the tight junction. Functionally, involved in the establishment of cell polarity in mammalian epithelial cells. Regulates the morphogenesis of tight junctions. Involved in promoting phosphorylation and cytoplasmic retention of transcriptional coactivators YAP1 and WWTR1/TAZ which leads to suppression of TGFB1-dependent transcription of target genes such as CCN2/CTGF, SERPINE1/PAI1, SNAI1/SNAIL1 and SMAD7. The protein is Protein crumbs homolog 3 (Crb3) of Mus musculus (Mouse).